A 309-amino-acid chain; its full sequence is Acetolactate synthase small subunit, mitochondrial (309 aa).

The transit peptide at 1 to 24 (MLRSLLQSGHRRVVASSCATMVRC) directs the protein to the mitochondrion. The ACT domain occupies 79–159 (VLNCLVQNEP…DYTNSEIIKR (81 aa)).

The protein belongs to the acetolactate synthase small subunit family. As to quaternary structure, the acetolactate synthase complex contains the catalytic regulatory subunit ILV2 and the regulatory small subunit ILV6.

It is found in the mitochondrion. It functions in the pathway amino-acid biosynthesis; L-isoleucine biosynthesis; L-isoleucine from 2-oxobutanoate: step 1/4. It participates in amino-acid biosynthesis; L-valine biosynthesis; L-valine from pyruvate: step 1/4. In terms of biological role, regulatory subunit of mitochondrial acetolactate synthase, which catalyzes the first of a series of common steps in the biosynthesis of the branched-chain amino acids. Stimulates activity of the acetolactate synthase catalytic subunit ILV2 seven- to tenfold and confers sensitivity to inhibition by valine and activation by ATP. The protein is Acetolactate synthase small subunit, mitochondrial (ILV6) of Saccharomyces cerevisiae (strain ATCC 204508 / S288c) (Baker's yeast).